Consider the following 206-residue polypeptide: Guanylate kinase (206 aa).

In terms of domain architecture, Guanylate kinase-like spans phenylalanine 5–lysine 183. ATP is bound at residue glycine 12–serine 19.

The protein belongs to the guanylate kinase family.

The protein resides in the cytoplasm. The enzyme catalyses GMP + ATP = GDP + ADP. In terms of biological role, essential for recycling GMP and indirectly, cGMP. The protein is Guanylate kinase (gmk) of Helicobacter pylori (strain ATCC 700392 / 26695) (Campylobacter pylori).